The chain runs to 706 residues: DNA ligase (706 aa).

Residues 1–20 are disordered; that stretch reads MSATAGTADESGVASAAASA. Residues 50-54, 99-100, and Glu-128 contribute to the NAD(+) site; these read DAEYD and SL. The N6-AMP-lysine intermediate role is filled by Lys-130. The NAD(+) site is built by Arg-151, Glu-188, Lys-304, and Lys-328. The Zn(2+) site is built by Cys-422, Cys-425, Cys-440, and Cys-446. In terms of domain architecture, BRCT spans 604 to 694; that stretch reads EGPRPLDGVT…VDAASKLAVP (91 aa).

This sequence belongs to the NAD-dependent DNA ligase family. LigA subfamily. It depends on Mg(2+) as a cofactor. Mn(2+) serves as cofactor.

The enzyme catalyses NAD(+) + (deoxyribonucleotide)n-3'-hydroxyl + 5'-phospho-(deoxyribonucleotide)m = (deoxyribonucleotide)n+m + AMP + beta-nicotinamide D-nucleotide.. Functionally, DNA ligase that catalyzes the formation of phosphodiester linkages between 5'-phosphoryl and 3'-hydroxyl groups in double-stranded DNA using NAD as a coenzyme and as the energy source for the reaction. It is essential for DNA replication and repair of damaged DNA. The protein is DNA ligase of Frankia casuarinae (strain DSM 45818 / CECT 9043 / HFP020203 / CcI3).